We begin with the raw amino-acid sequence, 205 residues long: N-(5'-phosphoribosyl)anthranilate isomerase (205 aa).

The protein belongs to the TrpF family.

It carries out the reaction N-(5-phospho-beta-D-ribosyl)anthranilate = 1-(2-carboxyphenylamino)-1-deoxy-D-ribulose 5-phosphate. Its pathway is amino-acid biosynthesis; L-tryptophan biosynthesis; L-tryptophan from chorismate: step 3/5. In Maridesulfovibrio salexigens (strain ATCC 14822 / DSM 2638 / NCIMB 8403 / VKM B-1763) (Desulfovibrio salexigens), this protein is N-(5'-phosphoribosyl)anthranilate isomerase.